The chain runs to 237 residues: Sugar fermentation stimulation protein homolog (237 aa).

It belongs to the SfsA family.

This chain is Sugar fermentation stimulation protein homolog, found in Pseudomonas putida (strain W619).